The primary structure comprises 444 residues: N-succinylarginine dihydrolase (444 aa).

Residues 19-28, Asn-110, and 137-138 contribute to the substrate site; these read SGLSFGNVAS and HR. Glu-174 is an active-site residue. Arg-214 serves as a coordination point for substrate. His-250 is an active-site residue. Positions 252 and 362 each coordinate substrate. Cys-368 functions as the Nucleophile in the catalytic mechanism.

Belongs to the succinylarginine dihydrolase family. Homodimer.

The enzyme catalyses N(2)-succinyl-L-arginine + 2 H2O + 2 H(+) = N(2)-succinyl-L-ornithine + 2 NH4(+) + CO2. The protein operates within amino-acid degradation; L-arginine degradation via AST pathway; L-glutamate and succinate from L-arginine: step 2/5. Functionally, catalyzes the hydrolysis of N(2)-succinylarginine into N(2)-succinylornithine, ammonia and CO(2). This Photobacterium profundum (strain SS9) protein is N-succinylarginine dihydrolase.